The chain runs to 148 residues: Transcriptional regulator MraZ (148 aa).

SpoVT-AbrB domains follow at residues 5–51 (STQL…PQPV) and 80–123 (ACDV…DMAK).

The protein belongs to the MraZ family. As to quaternary structure, forms oligomers.

The protein resides in the cytoplasm. Its subcellular location is the nucleoid. This is Transcriptional regulator MraZ from Nitrosomonas eutropha (strain DSM 101675 / C91 / Nm57).